The chain runs to 152 residues: MASHASCIFCKIIKGEIPSFKLIETAKTYSFLDIQPIAEAHVLIIPKHHGAKLHNIPDDYLSDILPVVKKLTKVLKLDENNTPEGEGYNVLQNNGRIAHQVVDHVHFHLIPKKDEATGLGVGWPAEATDFDKLGKLHEKLKEELAKVDNEKL.

An HIT domain is found at Ile-8–Leu-119. AMP-binding positions include Asp-33–Ile-34, Asn-93, His-99–Val-101, and His-106–His-108. Positions His-104–His-108 match the Histidine triad motif motif. Catalysis depends on His-106, which acts as the Tele-AMP-histidine intermediate.

Belongs to the HINT family. As to quaternary structure, homodimer. Requires Mg(2+) as cofactor.

It carries out the reaction adenosine 5'-phosphoramidate + H2O = AMP + NH4(+). Its function is as follows. Hydrolyzes adenosine 5'-monophosphoramidate substrates such as AMP-morpholidate, AMP-N-alanine methyl ester, AMP-alpha-acetyl lysine methyl ester and AMP-NH2. This chain is Adenosine 5'-monophosphoramidase HNT1, found in Candida albicans (strain SC5314 / ATCC MYA-2876) (Yeast).